Consider the following 273-residue polypeptide: 2,3,4,5-tetrahydropyridine-2,6-dicarboxylate N-succinyltransferase (273 aa).

The protein belongs to the transferase hexapeptide repeat family.

The protein localises to the cytoplasm. It catalyses the reaction (S)-2,3,4,5-tetrahydrodipicolinate + succinyl-CoA + H2O = (S)-2-succinylamino-6-oxoheptanedioate + CoA. It participates in amino-acid biosynthesis; L-lysine biosynthesis via DAP pathway; LL-2,6-diaminopimelate from (S)-tetrahydrodipicolinate (succinylase route): step 1/3. The chain is 2,3,4,5-tetrahydropyridine-2,6-dicarboxylate N-succinyltransferase from Acinetobacter baumannii (strain SDF).